A 616-amino-acid polypeptide reads, in one-letter code: Chaperone protein DnaK (616 aa).

At threonine 174 the chain carries Phosphothreonine; by autocatalysis. The interval 575–616 (QQTQGAQSDPGAAGFGGQQEAPGAGQDENVVDADYKVVDDDK) is disordered. The span at 607–616 (ADYKVVDDDK) shows a compositional bias: basic and acidic residues.

This sequence belongs to the heat shock protein 70 family.

In terms of biological role, acts as a chaperone. This is Chaperone protein DnaK from Ruminiclostridium cellulolyticum (strain ATCC 35319 / DSM 5812 / JCM 6584 / H10) (Clostridium cellulolyticum).